Here is a 546-residue protein sequence, read N- to C-terminus: Putative serine/threonine-protein kinase L268 (546 aa).

Positions 1 to 112 (MVCFSKYSGI…ILQTLDFHLV (112 aa)) constitute a Cyclin N-terminal domain. The Protein kinase domain maps to 260-544 (ITVVKNLGEG…QTLEEFNKFN (285 aa)). Residues 266 to 274 (LGEGTYGTV) and Lys287 each bind ATP. Asp389 serves as the catalytic Proton acceptor.

The protein belongs to the protein kinase superfamily. Ser/Thr protein kinase family.

The catalysed reaction is L-seryl-[protein] + ATP = O-phospho-L-seryl-[protein] + ADP + H(+). It catalyses the reaction L-threonyl-[protein] + ATP = O-phospho-L-threonyl-[protein] + ADP + H(+). The protein is Putative serine/threonine-protein kinase L268 of Acanthamoeba polyphaga mimivirus (APMV).